We begin with the raw amino-acid sequence, 369 residues long: Probable dual-specificity RNA methyltransferase RlmN (369 aa).

Glu108 functions as the Proton acceptor in the catalytic mechanism. The 238-residue stretch at 114 to 351 (YPDRATLCIS…LAQGVSCTVR (238 aa)) folds into the Radical SAM core domain. Cys121 and Cys362 are disulfide-bonded. The [4Fe-4S] cluster site is built by Cys128, Cys132, and Cys135. S-adenosyl-L-methionine contacts are provided by residues 183–184 (GE), Ser217, 240–242 (SLH), and Asn319. Cys362 acts as the S-methylcysteine intermediate in catalysis.

The protein belongs to the radical SAM superfamily. RlmN family. [4Fe-4S] cluster serves as cofactor.

It is found in the cytoplasm. It carries out the reaction adenosine(2503) in 23S rRNA + 2 reduced [2Fe-2S]-[ferredoxin] + 2 S-adenosyl-L-methionine = 2-methyladenosine(2503) in 23S rRNA + 5'-deoxyadenosine + L-methionine + 2 oxidized [2Fe-2S]-[ferredoxin] + S-adenosyl-L-homocysteine. It catalyses the reaction adenosine(37) in tRNA + 2 reduced [2Fe-2S]-[ferredoxin] + 2 S-adenosyl-L-methionine = 2-methyladenosine(37) in tRNA + 5'-deoxyadenosine + L-methionine + 2 oxidized [2Fe-2S]-[ferredoxin] + S-adenosyl-L-homocysteine. Functionally, specifically methylates position 2 of adenine 2503 in 23S rRNA and position 2 of adenine 37 in tRNAs. In Rhodococcus opacus (strain B4), this protein is Probable dual-specificity RNA methyltransferase RlmN.